The following is a 123-amino-acid chain: uncharacterized protein (123 aa).

Residues 36–76 are a coiled coil; the sequence is VDRQENKKEFLSAEEAREKFKELINQVRSWKEQMSTLSKYA.

This is an uncharacterized protein from Aquifex aeolicus (strain VF5).